The sequence spans 496 residues: Glutamyl-tRNA(Gln) amidotransferase subunit B, organellar chromatophore (496 aa).

This sequence belongs to the GatB/GatE family. GatB subfamily. Subunit of the heterotrimeric GatCAB amidotransferase (AdT) complex, composed of A, B and C subunits.

Its subcellular location is the plastid. It localises to the organellar chromatophore. The catalysed reaction is L-glutamyl-tRNA(Gln) + L-glutamine + ATP + H2O = L-glutaminyl-tRNA(Gln) + L-glutamate + ADP + phosphate + H(+). In terms of biological role, allows the formation of correctly charged Gln-tRNA(Gln) through the transamidation of misacylated Glu-tRNA(Gln). The reaction takes place in the presence of glutamine and ATP through an activated gamma-phospho-Glu-tRNA(Gln). In Paulinella chromatophora, this protein is Glutamyl-tRNA(Gln) amidotransferase subunit B, organellar chromatophore.